Consider the following 464-residue polypeptide: NADH dehydrogenase [ubiquinone] flavoprotein 1, mitochondrial (464 aa).

Residues 1 to 20 constitute a mitochondrion transit peptide; the sequence is MLATRRLLGWSLPARVSVRF. An N6-acetyllysine; alternate modification is found at Lys-81. Lys-81 bears the N6-succinyllysine; alternate mark. An NADH-binding site is contributed by 87-96; that stretch reads GRGGAGFPTG. At Lys-104 the chain carries N6-acetyllysine. 199–247 contributes to the FMN binding site; that stretch reads RGAGAYICGEETALIESIEGKQGKPRLKPPFPADVGVFGCPTTVANVET. The residue at position 257 (Arg-257) is an Omega-N-methylarginine. N6-acetyllysine is present on Lys-375. 4 residues coordinate [4Fe-4S] cluster: Cys-379, Cys-382, Cys-385, and Cys-425.

Belongs to the complex I 51 kDa subunit family. In terms of assembly, core subunit of respiratory chain NADH dehydrogenase (Complex I) which is composed of 45 different subunits. This is a component of the flavoprotein-sulfur (FP) fragment of the enzyme. Interacts with RAB5IF. The cofactor is FMN. It depends on [4Fe-4S] cluster as a cofactor.

The protein localises to the mitochondrion inner membrane. It carries out the reaction a ubiquinone + NADH + 5 H(+)(in) = a ubiquinol + NAD(+) + 4 H(+)(out). Core subunit of the mitochondrial membrane respiratory chain NADH dehydrogenase (Complex I) which catalyzes electron transfer from NADH through the respiratory chain, using ubiquinone as an electron acceptor. Part of the peripheral arm of the enzyme, where the electrons from NADH are accepted by flavin mononucleotide (FMN) and then passed along a chain of iron-sulfur clusters by electron tunnelling to the final acceptor ubiquinone. Contains FMN, which is the initial electron acceptor as well as one iron-sulfur cluster. This chain is NADH dehydrogenase [ubiquinone] flavoprotein 1, mitochondrial, found in Homo sapiens (Human).